The primary structure comprises 158 residues: Transcription elongation factor GreA (158 aa).

Residues 48–75 (NSEYDSAKEDQAFVEGRIAQLEKMIRNA) adopt a coiled-coil conformation.

It belongs to the GreA/GreB family.

Necessary for efficient RNA polymerase transcription elongation past template-encoded arresting sites. The arresting sites in DNA have the property of trapping a certain fraction of elongating RNA polymerases that pass through, resulting in locked ternary complexes. Cleavage of the nascent transcript by cleavage factors such as GreA or GreB allows the resumption of elongation from the new 3'terminus. GreA releases sequences of 2 to 3 nucleotides. The protein is Transcription elongation factor GreA of Shouchella clausii (strain KSM-K16) (Alkalihalobacillus clausii).